We begin with the raw amino-acid sequence, 453 residues long: Divalent metal cation transporter MntH (453 aa).

The next 11 membrane-spanning stretches (helical) occupy residues 39 to 59, 66 to 86, 114 to 134, 146 to 166, 175 to 195, 217 to 237, 270 to 290, 310 to 330, 362 to 382, 388 to 408, and 427 to 447; these read LAFLGPGLLVAVGYMDPGNWI, AQYGYTLLFIILISSLSAMLL, AIMFWIIAELAIIATDIAEVI, IPLIVGALITVFDVFLLLFIM, AIVGTLIFTVLAIFVFEVYIS, GILYIALGIIGATIMPHNLYL, LSIAFVVNCLLLTLGAALFFG, PALGATLGGIMSTLFAVALLA, LITRSLAVIPVIICLIVFKGN, QLLVFSQVFLSIALPFSLIPL, and INIISWLLIIVLSGLNVYLII.

This sequence belongs to the NRAMP family.

The protein resides in the cell membrane. Its function is as follows. H(+)-stimulated, divalent metal cation uptake system. This is Divalent metal cation transporter MntH from Staphylococcus epidermidis (strain ATCC 12228 / FDA PCI 1200).